A 311-amino-acid polypeptide reads, in one-letter code: Protoheme IX farnesyltransferase 1 (311 aa).

9 consecutive transmembrane segments (helical) span residues 31-51 (VMAL…GAVN), 52-72 (PVIA…AGAL), 97-117 (VTPG…VMTL), 119-139 (VLVG…YIVI), 152-172 (IVIG…AATG), 179-199 (LVLF…LALF), 225-245 (ILAY…FGFT), 247-267 (GYYG…SWKV), and 281-301 (LFAY…ADTI).

This sequence belongs to the UbiA prenyltransferase family. Protoheme IX farnesyltransferase subfamily.

Its subcellular location is the cell inner membrane. It carries out the reaction heme b + (2E,6E)-farnesyl diphosphate + H2O = Fe(II)-heme o + diphosphate. It functions in the pathway porphyrin-containing compound metabolism; heme O biosynthesis; heme O from protoheme: step 1/1. In terms of biological role, converts heme B (protoheme IX) to heme O by substitution of the vinyl group on carbon 2 of heme B porphyrin ring with a hydroxyethyl farnesyl side group. The polypeptide is Protoheme IX farnesyltransferase 1 (Mesorhizobium japonicum (strain LMG 29417 / CECT 9101 / MAFF 303099) (Mesorhizobium loti (strain MAFF 303099))).